Reading from the N-terminus, the 244-residue chain is Uridylate kinase (244 aa).

12–15 (KLSG) contacts ATP. The segment at 20 to 25 (GERGVG) is involved in allosteric activation by GTP. Gly-54 is a binding site for UMP. 2 residues coordinate ATP: Gly-55 and Arg-59. UMP-binding positions include Asp-74 and 135–142 (IGSPYFST). Positions 163, 169, and 172 each coordinate ATP.

Belongs to the UMP kinase family. In terms of assembly, homohexamer.

The protein localises to the cytoplasm. The enzyme catalyses UMP + ATP = UDP + ADP. The protein operates within pyrimidine metabolism; CTP biosynthesis via de novo pathway; UDP from UMP (UMPK route): step 1/1. Its activity is regulated as follows. Allosterically activated by GTP. Inhibited by UTP. In terms of biological role, catalyzes the reversible phosphorylation of UMP to UDP. The chain is Uridylate kinase from Streptococcus suis (strain 98HAH33).